A 463-amino-acid polypeptide reads, in one-letter code: Annexin A7 (463 aa).

The span at 1-18 shows a compositional bias: pro residues; that stretch reads MSYPGYPPTGYPPFPGYP. Disordered stretches follow at residues 1-34 and 77-149; these read MSYP…QYPY and SPGG…MTQG. Residues 1-143 are repeat-rich region; it reads MSYPGYPPTG…GGQAPYPSQP (143 aa). A 3 X 5 AA tandem repeats of G-Y-P-P-X region spans residues 5 to 20; the sequence is GYPPTGYPPFPGYPPA. A compositionally biased stretch (gly residues) spans 86–99; sequence GGQGFGAPPGGAGF. Annexin repeat units follow at residues 160 to 231, 232 to 303, 315 to 387, and 391 to 462; these read FDAM…ALFM, PSTY…SMCQ, QMAQ…TILQ, and NRPA…AIVG. K208 carries the N6-acetyllysine modification.

The protein belongs to the annexin family. In terms of assembly, interacts with PDCD6.

Its function is as follows. Calcium/phospholipid-binding protein which promotes membrane fusion and is involved in exocytosis. The chain is Annexin A7 (Anxa7) from Mus musculus (Mouse).